Reading from the N-terminus, the 399-residue chain is Transferrin receptor subunit ESAG6 (399 aa).

The signal sequence occupies residues 1 to 17; sequence MRFWFVLLALLGKEIYA. N-linked (GlcNAc...) asparagine glycans are attached at residues Asn-26 and Asn-110. Disulfide bonds link Cys-34–Cys-161, Cys-84–Cys-312, and Cys-144–Cys-215. Residues Asn-235, Asn-250, and Asn-360 are each glycosylated (N-linked (GlcNAc...) asparagine). Asn-376 carries GPI-anchor amidated asparagine lipidation. A propeptide spans 377-399 (removed in mature form); the sequence is AAAIHLSVSTAALCRSALLLGVL.

As to quaternary structure, heterodimer composed of ESAG6 and ESAG7. In terms of processing, N-glycosylated. Glycosylation is dispensable for heterodimer formation and host transferrin binding.

It is found in the cell membrane. It localises to the flagellar pocket. Transferrin receptor subunit involved in receptor-mediated acquisition of iron from the environment by binding host TF/transferrin. This is Transferrin receptor subunit ESAG6 from Trypanosoma brucei brucei.